The primary structure comprises 515 residues: Signal transduction histidine-protein kinase/phosphatase MprB (515 aa).

The Cytoplasmic portion of the chain corresponds to 1 to 24 (MTLPPQPSRLKPPRNTSSLSLRWR). Residues 25-45 (VMLLAMSMVAMVVVLMSVAVY) form a helical membrane-spanning segment. Topologically, residues 46–165 (AVVSRALYDD…TGQVLGRLGT (120 aa)) are extracellular. The helical transmembrane segment at 166-186 (VLLIVGGVGVAVAAIAGGMVA) threads the bilayer. Positions 187 to 239 (RAGLRPVGRLTQAAERVARTDDLRPIPVFGSDELARLTEAFNMMLRALTESRE) constitute an HAMP domain. Topologically, residues 187-515 (RAGLRPVGRL…GKSRSASKEL (329 aa)) are cytoplasmic. Positions 247 to 467 (DAGHELRTPL…SFYVMLPGRP (221 aa)) constitute a Histidine kinase domain. At histidine 250 the chain carries Phosphohistidine; by autocatalysis. The segment at 468-515 (LTPGGNGTAPVPAAQFDPDMRSAGSRADRRVIKNTETNGKSRSASKEL) is disordered.

Requires Mg(2+) as cofactor. Mn(2+) is required as a cofactor. Post-translationally, autophosphorylated.

The protein localises to the cell membrane. It carries out the reaction ATP + protein L-histidine = ADP + protein N-phospho-L-histidine.. Functionally, member of the two-component regulatory system MprB/MprA which contributes to maintaining a balance among several systems involved in stress resistance and is required for establishment and maintenance of persistent infection in the host. In response to environmental signals MprB acts both as a membrane-associated protein kinase that undergoes autophosphorylation and subsequently transfers the phosphate to MprA, and a protein phosphatase that dephosphorylates phospho-MprA. The chain is Signal transduction histidine-protein kinase/phosphatase MprB (mprB) from Mycobacterium sp. (strain JLS).